We begin with the raw amino-acid sequence, 182 residues long: Ribosome-recycling factor (182 aa).

Positions 137–158 (KKSEKESEISEDQSRDEQDNVQ) are disordered.

The protein belongs to the RRF family.

It localises to the cytoplasm. Responsible for the release of ribosomes from messenger RNA at the termination of protein biosynthesis. May increase the efficiency of translation by recycling ribosomes from one round of translation to another. This chain is Ribosome-recycling factor, found in Prochlorococcus marinus (strain MIT 9211).